We begin with the raw amino-acid sequence, 1749 residues long: Kinesin-like protein KIF13A (1749 aa).

The Kinesin motor domain occupies 5–352 (KVKVAVRVRP…LRYADRAKRI (348 aa)). 102-109 (GQTGSGKS) contributes to the ATP binding site. The stretch at 359–431 (NEDPNAKVIR…QERQRQLESM (73 aa)) forms a coiled coil. Residues 469-519 (HTRVGADTSQDIQLFGIGIQPEHCEIDIAADGDITLTPKENARSCVNGTLV) enclose the FHA domain. A coiled-coil region spans residues 552–775 (LKDFERETSS…VPEAKRLYGK (224 aa)). 2 disordered regions span residues 633–652 (QQLS…LAYS) and 834–853 (IPER…SGSL). A Phosphoserine modification is found at Ser636. Residues 1086 to 1126 (SDALIKRREYLDEQIKKVSNKKEKTEDDMEREARLVEQWVG) adopt a coiled-coil conformation. Ser1274 is modified (phosphoserine). Residues 1370-1383 (LSTPNVHNVSSSRP) are compositionally biased toward polar residues. 2 disordered regions span residues 1370-1402 (LSTP…QLDV) and 1417-1436 (TLPR…ENPH). Over residues 1421–1430 (DSPRRSKEGC) the composition is skewed to basic and acidic residues. A phosphoserine mark is found at Ser1441, Ser1477, Ser1481, Ser1524, Ser1600, and Ser1650. The stretch at 1475–1499 (LLSQEDSEEEENELEALSRKLMLTQ) forms a coiled coil. 2 disordered regions span residues 1584–1665 (CAEP…GHQA) and 1698–1749 (DFDG…TATR). A compositionally biased stretch (basic and acidic residues) spans 1719–1741 (ETDHKGIPERPPDADRLHPKIEN).

This sequence belongs to the TRAFAC class myosin-kinesin ATPase superfamily. Kinesin family. Interacts with AP1G1 and AP1G2. Interacts with ZFYVE26. Interacts with AP2B1.

Its subcellular location is the golgi apparatus membrane. The protein localises to the cytoplasm. It localises to the cytoskeleton. The protein resides in the microtubule organizing center. It is found in the centrosome. Its subcellular location is the midbody. The protein localises to the endosome membrane. In terms of biological role, plus end-directed microtubule-dependent motor protein involved in intracellular transport and regulating various processes such as mannose-6-phosphate receptor (M6PR) transport to the plasma membrane, endosomal sorting during melanosome biogenesis and cytokinesis. During melanosome maturation, required for delivering melanogenic enzymes from recycling endosomes to nascent melanosomes by creating peripheral recycling endosomal subdomains in melanocytes. Also required for the abscission step in cytokinesis: mediates translocation of ZFYVE26, and possibly TTC19, to the midbody during cytokinesis. Mediates the transport of M6PR-containing vesicles from trans-Golgi network to the plasma membrane via direct interaction with the AP-1 complex. The chain is Kinesin-like protein KIF13A (Kif13a) from Mus musculus (Mouse).